The sequence spans 232 residues: 7-cyano-7-deazaguanine synthase (232 aa).

8–18 (LSGGLDSATVL) is an ATP binding site. Residues Cys-188, Cys-198, Cys-201, and Cys-204 each coordinate Zn(2+).

Belongs to the QueC family. The cofactor is Zn(2+).

The catalysed reaction is 7-carboxy-7-deazaguanine + NH4(+) + ATP = 7-cyano-7-deazaguanine + ADP + phosphate + H2O + H(+). It functions in the pathway purine metabolism; 7-cyano-7-deazaguanine biosynthesis. Catalyzes the ATP-dependent conversion of 7-carboxy-7-deazaguanine (CDG) to 7-cyano-7-deazaguanine (preQ(0)). This chain is 7-cyano-7-deazaguanine synthase, found in Nitrosospira multiformis (strain ATCC 25196 / NCIMB 11849 / C 71).